An 87-amino-acid chain; its full sequence is Insulin-related peptide 1 (87 aa).

A signal peptide spans 1-19 (MKSFMVFVLIFACFSCYYA). A propeptide spanning residues 20–44 (QESTNFYCGRTLSRALAVLCYGAES) is cleaved from the precursor. Arginine 64 carries the post-translational modification Arginine amide. Positions 68–87 (GPVDECCEKACSIQELMTYC) are excised as a propeptide.

Belongs to the insulin family. DAGWWIPQHGHHALAGVR-amide: Expressed in corpora cardiaca (CC), corpora allata (CA), antennal lobe (AL) and gnathal ganglion (GNG) (at protein level). Expression in CC and CA detected in most animals, in AL and GNG in few animals (at protein level).

Its subcellular location is the secreted. This is Insulin-related peptide 1 from Agrotis ipsilon (Black cutworm moth).